Here is a 600-residue protein sequence, read N- to C-terminus: Adenine deaminase 3 (600 aa).

It belongs to the metallo-dependent hydrolases superfamily. Adenine deaminase family. Mn(2+) serves as cofactor.

It catalyses the reaction adenine + H2O + H(+) = hypoxanthine + NH4(+). The protein is Adenine deaminase 3 of Rhizobium johnstonii (strain DSM 114642 / LMG 32736 / 3841) (Rhizobium leguminosarum bv. viciae).